The following is a 388-amino-acid chain: D-xylose dehydrogenase (388 aa).

Belongs to the Gfo/Idh/MocA family. Homotetramer. Zn(2+) is required as a cofactor.

The catalysed reaction is D-xylose + NADP(+) = D-xylono-1,5-lactone + NADPH + H(+). It catalyses the reaction D-xylose + NAD(+) = D-xylono-1,5-lactone + NADH + H(+). It functions in the pathway carbohydrate metabolism; D-xylose degradation. Catalyzes the NADP(+)-dependent oxidation of D-xylose. Is able to use both NADP(+) and NAD(+); however, the enzyme shows a very strong preference for NADP(+). Is likely involved in the first step of the oxidative D-xylose degradation pathway. The polypeptide is D-xylose dehydrogenase (xdh) (Paenarthrobacter nicotinovorans (Arthrobacter nicotinovorans)).